Reading from the N-terminus, the 187-residue chain is Homeobox expressed in ES cells 1-B (187 aa).

A DNA-binding region (homeobox) is located at residues 110–169; it reads GRRPRTAFTRSQIEILENVFRVNSYPGIDVREELASKLALDEDRIQIWFQNRRAKLKRSH.

It belongs to the ANF homeobox family. In terms of assembly, the N-terminus interacts with the LIM 2 domain of zyx. In terms of tissue distribution, first expressed at a low level in the late blastula stage (stage 9) in most cells of the animal half of the embryo. Following this, predominantly expressed in two zones; the dorsal blastopore lip (Spemann organizer) at the beginning of gastrulation, and subsequently in the anterior part of the neural anlage (the region of future forebrain).

It is found in the nucleus. Regulates the earliest stages of development of the anterior neural plate. Plays a role in forebrain development by inhibiting the expression of otx2 and pax6 in the rostral region of the anterior neural plate. Necessary for both neural differentiation and neural patterning. Controls Spemann organizer development. May act as a transcriptional repressor. The protein is Homeobox expressed in ES cells 1-B (hesx1-b) of Xenopus laevis (African clawed frog).